Here is a 411-residue protein sequence, read N- to C-terminus: Tyrosine--tRNA ligase (411 aa).

Residue tyrosine 34 coordinates L-tyrosine. Positions 39-48 (CTATSLHIGS) match the 'HIGH' region motif. Positions 171 and 175 each coordinate L-tyrosine. Residues 231–235 (KMGKT) carry the 'KMSKS' region motif. Lysine 234 provides a ligand contact to ATP. Residues 345–411 (ISAYELFHEA…GKKRHILVRV (67 aa)) form the S4 RNA-binding domain.

The protein belongs to the class-I aminoacyl-tRNA synthetase family. TyrS type 1 subfamily. As to quaternary structure, homodimer.

It is found in the cytoplasm. The catalysed reaction is tRNA(Tyr) + L-tyrosine + ATP = L-tyrosyl-tRNA(Tyr) + AMP + diphosphate + H(+). In terms of biological role, catalyzes the attachment of tyrosine to tRNA(Tyr) in a two-step reaction: tyrosine is first activated by ATP to form Tyr-AMP and then transferred to the acceptor end of tRNA(Tyr). The polypeptide is Tyrosine--tRNA ligase (Rickettsia felis (strain ATCC VR-1525 / URRWXCal2) (Rickettsia azadi)).